The sequence spans 292 residues: UTP--glucose-1-phosphate uridylyltransferase (292 aa).

It belongs to the UDPGP type 2 family.

The enzyme catalyses alpha-D-glucose 1-phosphate + UTP + H(+) = UDP-alpha-D-glucose + diphosphate. Its function is as follows. May play a role in stationary phase survival. This is UTP--glucose-1-phosphate uridylyltransferase (galU) from Mycoplasma genitalium (strain ATCC 33530 / DSM 19775 / NCTC 10195 / G37) (Mycoplasmoides genitalium).